A 113-amino-acid chain; its full sequence is U11-theraphotoxin-Hhn1a (113 aa).

A signal peptide spans 1 to 21 (MNTVRVAFLLVFVLAVSLGQA). The propeptide occupies 22-74 (DKDENRMEMQEKTEQGKSYLDFAENLLLQKLEEPEAKLLEEDSEESRNSRQKR). Residues 58 to 69 (KLLEEDSEESRN) are compositionally biased toward basic and acidic residues. The interval 58–83 (KLLEEDSEESRNSRQKRCIGEGVPCD) is disordered. 3 disulfide bridges follow: Cys-75–Cys-90, Cys-82–Cys-95, and Cys-89–Cys-110.

This sequence belongs to the neurotoxin 14 (magi-1) family. 01 (HNTX-16) subfamily. In terms of tissue distribution, expressed by the venom gland.

It localises to the secreted. Its function is as follows. Probable ion channel inhibitor. This is U11-theraphotoxin-Hhn1a from Cyriopagopus hainanus (Chinese bird spider).